Here is a 150-residue protein sequence, read N- to C-terminus: Galectin-2 (150 aa).

In terms of domain architecture, Galectin spans 9–141 (NQVKLQNDFK…FSSPVTVDVH (133 aa)). Positions 51, 55, 64, 75, and 77 each coordinate a carbohydrate.

In terms of assembly, homotetramer. Oligomerization is required for carbohydrate binding.

The protein localises to the secreted. The protein resides in the extracellular space. Its subcellular location is the extracellular matrix. It is found in the cell wall. It localises to the endomembrane system. Binds lactose. May play a role in fruiting body formation. Displays toxicity towards the nematode C.elegans by binding to a specific Gal-beta-1,4-Fuc-alpha-1,6 modification of N-glycan cores on C.elegans intestinal cells. This is Galectin-2 (Cgl2) from Coprinopsis cinerea (Inky cap fungus).